A 235-amino-acid polypeptide reads, in one-letter code: Motile sperm domain-containing protein 3 (235 aa).

Disordered stretches follow at residues 1 to 30 and 143 to 170; these read MRRG…PSGP and ELQG…PFPE. The MSP domain maps to 33–145; sequence PVLVFPPDLV…RAPAYPLELQ (113 aa). Transmembrane regions (helical) follow at residues 180–200 and 213–233; these read SFLL…LPLQ and VSLG…MVFL.

It localises to the membrane. The protein is Motile sperm domain-containing protein 3 (MOSPD3) of Bos taurus (Bovine).